A 348-amino-acid polypeptide reads, in one-letter code: Phenylalanine--tRNA ligase alpha subunit (348 aa).

Glu268 serves as a coordination point for Mg(2+).

Belongs to the class-II aminoacyl-tRNA synthetase family. Phe-tRNA synthetase alpha subunit type 1 subfamily. Tetramer of two alpha and two beta subunits. The cofactor is Mg(2+).

It localises to the cytoplasm. It carries out the reaction tRNA(Phe) + L-phenylalanine + ATP = L-phenylalanyl-tRNA(Phe) + AMP + diphosphate + H(+). In Bordetella parapertussis (strain 12822 / ATCC BAA-587 / NCTC 13253), this protein is Phenylalanine--tRNA ligase alpha subunit.